A 109-amino-acid chain; its full sequence is Ribonuclease P protein component 4 (109 aa).

Residues C65, C68, C94, and C97 each coordinate Zn(2+).

It belongs to the eukaryotic/archaeal RNase P protein component 4 family. Consists of a catalytic RNA component and at least 4-5 protein subunits. Zn(2+) serves as cofactor.

Its subcellular location is the cytoplasm. It carries out the reaction Endonucleolytic cleavage of RNA, removing 5'-extranucleotides from tRNA precursor.. Its function is as follows. Part of ribonuclease P, a protein complex that generates mature tRNA molecules by cleaving their 5'-ends. This is Ribonuclease P protein component 4 from Methanococcus vannielii (strain ATCC 35089 / DSM 1224 / JCM 13029 / OCM 148 / SB).